The primary structure comprises 312 residues: Olfactory receptor 6C68 (312 aa).

Residues 1–23 (MRKHTAITTFILLGLTEDPQLQV) are Extracellular-facing. A helical transmembrane segment spans residues 24–44 (LLFMFLFITYMLSVTGKLTII). Over 45-55 (ALTMLDPHLKT) the chain is Cytoplasmic. The helical transmembrane segment at 56–76 (PMYFFLQNLSFLEISFTATCV) threads the bilayer. Residues 77-95 (PRFLYSISTGNKIITYNAC) lie on the Extracellular side of the membrane. C95 and C177 form a disulfide bridge. The helical transmembrane segment at 96 to 116 (VIQLFFADLFGVTEFFLLATM) threads the bilayer. The Cytoplasmic segment spans residues 117–143 (SYDRYVAICKPLHYMAIMSNKVCKTMV). A helical transmembrane segment spans residues 144–164 (ICCWMAALMIILPPLSLGFHL). The Extracellular portion of the chain corresponds to 165–197 (EFCDSNVINHFGCDALPILKIPCSDTSLIEQMV). A helical membrane pass occupies residues 198–218 (VASAVLTFIITLVCVVLSYTY). At 219–239 (IIRTILKFPSVQQKKKAFSTC) the chain is on the cytoplasmic side. The helical transmembrane segment at 240–260 (SSHITVVSITYGSCIFIYIKP) threads the bilayer. At 261-271 (SAKEEVNINKG) the chain is on the extracellular side. A helical membrane pass occupies residues 272-292 (VSVLISSISPMLNSFIYTLRN). Residues 293–312 (EQVKQAFHDSLKKIAFRLKK) lie on the Cytoplasmic side of the membrane.

Belongs to the G-protein coupled receptor 1 family.

It localises to the cell membrane. Functionally, odorant receptor. This Homo sapiens (Human) protein is Olfactory receptor 6C68 (OR6C68).